Consider the following 66-residue polypeptide: Ocellatin-PT5 (66 aa).

An N-terminal signal peptide occupies residues 1–22 (MAFLKKSLFLVLFLGLVSLSIC). The propeptide occupies 23 to 39 (DEEKRQDEDDDDDDDEE). Valine 66 carries the valine amide modification.

As to expression, expressed by the skin glands.

It localises to the secreted. Functionally, has antibacterial activity against Gram-negative bacterium E.coli ATCC 25922 (MIC=300 uM) but not against S.pneumoniae ATCC 700603, S.choleraesuis ATCC 14028 or Gram-positive bacterium S.aureus ATCC 29313. Shows very little hemolytic activity and no cytotoxicity. This is Ocellatin-PT5 from Leptodactylus pustulatus (Ceara white-lipped frog).